Here is a 227-residue protein sequence, read N- to C-terminus: Large ribosomal subunit protein uL3 (227 aa).

The protein belongs to the universal ribosomal protein uL3 family. Part of the 50S ribosomal subunit. Forms a cluster with proteins L14 and L19.

Functionally, one of the primary rRNA binding proteins, it binds directly near the 3'-end of the 23S rRNA, where it nucleates assembly of the 50S subunit. In Leuconostoc citreum (strain KM20), this protein is Large ribosomal subunit protein uL3.